The sequence spans 349 residues: PDZ and LIM domain protein 2 (349 aa).

Positions 1–84 constitute a PDZ domain; sequence MALTVNVVGP…PLRLQLDRSQ (84 aa). Disordered regions lie at residues 72 to 95 and 108 to 147; these read SASP…NGEG and LRTH…PIAL. Composition is skewed to polar residues over residues 81 to 90 and 108 to 121; these read DRSQTASPGQ and LRTH…QRSA. S124, S127, S129, S134, and S137 each carry phosphoserine. Phosphothreonine occurs at positions 138 and 142. Phosphoserine occurs at positions 143 and 163. Disordered regions lie at residues 168 to 212 and 250 to 272; these read ATHH…SSLD and ERGG…PTSR. Positions 176 to 192 are enriched in polar residues; sequence GQPTSQQAGHSSPSDST. 6 positions are modified to phosphoserine: S199, S204, S205, S209, S210, and S263. The span at 199-211 shows a compositional bias: low complexity; that stretch reads SPGRPSSPRLSSL. A compositionally biased stretch (polar residues) spans 260-270; the sequence is SSLSPKASLPT. The 61-residue stretch at 281–341 folds into the LIM zinc-binding domain; sequence HTCEKCSVNI…EKHARQRYSM (61 aa).

Interacts with alpha-actinins ACTN1 and ACTN4, FLNA and MYH9. Interacts (via LIM zinc-binding domain) with MKRN2. Highly expressed in cornea and lung. Expressed at intermediate level in sclera and combined tissues of the eye irido-corneal angle. Specifically expressed in the corneal epithelial cells but not in other corneal layers.

It localises to the cytoplasm. The protein resides in the cytoskeleton. In terms of biological role, probable adapter protein located at the actin cytoskeleton that promotes cell attachment. Necessary for the migratory capacity of epithelial cells. Overexpression enhances cell adhesion to collagen and fibronectin and suppresses anchorage independent growth. May contribute to tumor cell migratory capacity. In Rattus norvegicus (Rat), this protein is PDZ and LIM domain protein 2 (Pdlim2).